Here is a 222-residue protein sequence, read N- to C-terminus: Prolactin-3B1 (222 aa).

Positions 1–31 (MKLSLSQPCSFSGALLLLAVSNLLVWEKVTS) are cleaved as a signal peptide. Intrachain disulfides connect C82–C197 and C214–C222.

Belongs to the somatotropin/prolactin family.

It is found in the secreted. This chain is Prolactin-3B1 (Prl3b1), found in Mus musculus (Mouse).